A 497-amino-acid chain; its full sequence is Methionine--tRNA ligase (497 aa).

Residues 14-24 (YYVNDVPHLGH) carry the 'HIGH' region motif. Positions 129, 132, 147, and 150 each coordinate Zn(2+). The short motif at 295–299 (KMSKT) is the 'KMSKS' region element. K298 serves as a coordination point for ATP.

The protein belongs to the class-I aminoacyl-tRNA synthetase family. MetG type 2A subfamily. Monomer. The cofactor is Zn(2+).

It is found in the cytoplasm. The catalysed reaction is tRNA(Met) + L-methionine + ATP = L-methionyl-tRNA(Met) + AMP + diphosphate. Is required not only for elongation of protein synthesis but also for the initiation of all mRNA translation through initiator tRNA(fMet) aminoacylation. The sequence is that of Methionine--tRNA ligase (metG) from Aquifex aeolicus (strain VF5).